The sequence spans 707 residues: Prolyl endopeptidase-like (707 aa).

Active-site charge relay system residues include Ser538, Asp624, and His670.

The protein belongs to the peptidase S9A family. Homodimer.

The protein localises to the cytoplasm. Its subcellular location is the cytosol. Functionally, serine peptidase whose precise substrate specificity remains unclear. Does not cleave peptides after a arginine or lysine residue. Regulates trans-Golgi network morphology and sorting by regulating the membrane binding of the AP-1 complex. May play a role in the regulation of synaptic vesicle exocytosis. This Xenopus laevis (African clawed frog) protein is Prolyl endopeptidase-like (prepl).